A 269-amino-acid chain; its full sequence is tRNA (guanine-N(7)-)-methyltransferase (269 aa).

Positions 1–38 (MDGVNDAANHTVESVPGRPSTASAPLEAGRRSPTGSRL) are disordered. The S-adenosyl-L-methionine site is built by glutamate 91, glutamate 116, aspartate 143, and aspartate 166. Aspartate 166 is an active-site residue. Residues lysine 170, aspartate 202, and 247–250 (TKFE) contribute to the substrate site.

It belongs to the class I-like SAM-binding methyltransferase superfamily. TrmB family.

The enzyme catalyses guanosine(46) in tRNA + S-adenosyl-L-methionine = N(7)-methylguanosine(46) in tRNA + S-adenosyl-L-homocysteine. The protein operates within tRNA modification; N(7)-methylguanine-tRNA biosynthesis. Its function is as follows. Catalyzes the formation of N(7)-methylguanine at position 46 (m7G46) in tRNA. The polypeptide is tRNA (guanine-N(7)-)-methyltransferase (Nocardia farcinica (strain IFM 10152)).